The following is a 1174-amino-acid chain: Nucleolar complex protein 1 (1174 aa).

Disordered stretches follow at residues 1–20 (MPAA…NKKI), 29–237 (VVKQ…EESQ), 715–742 (YEDV…VKSS), 893–922 (AQNK…LKEG), 944–1085 (GVDE…GGRS), and 1116–1174 (VKGQ…KRKH). Over residues 33-63 (NKKEHPQRPKFEGKEQVKKPQKIKFGEDGKA) the composition is skewed to basic and acidic residues. A compositionally biased stretch (polar residues) spans 95–104 (ASKSFNQNHK). Composition is skewed to basic and acidic residues over residues 113–122 (KFGEDREAVH) and 176–200 (KFGD…EDGA). Composition is skewed to acidic residues over residues 207–216 (SDGDSDEELG) and 715–724 (YEDVKDEADD). Basic and acidic residues-rich tracts occupy residues 725–739 (TKDS…DNDV) and 897–906 (KQKEIKKDAA). Acidic residues-rich tracts occupy residues 907–916 (EEGDDGEAGE), 945–954 (VDEEQDEEEL), 981–1038 (AEDE…DEGS), and 1048–1065 (DSSD…DDED). Basic and acidic residues predominate over residues 1127 to 1143 (NKDKSSDKQLKWEENRR). The span at 1156–1166 (GKPAAKGGRPQ) shows a compositional bias: low complexity.

Belongs to the CBF/MAK21 family.

It is found in the nucleus. The protein localises to the nucleolus. Functionally, involved in rRNA processing and ribosome maturation. May also act as a transcription factor. This Drosophila melanogaster (Fruit fly) protein is Nucleolar complex protein 1.